The chain runs to 191 residues: FMN reductase (NADH) RutF (191 aa).

It belongs to the non-flavoprotein flavin reductase family. RutF subfamily.

The catalysed reaction is FMNH2 + NAD(+) = FMN + NADH + 2 H(+). Its function is as follows. Catalyzes the reduction of FMN to FMNH2 which is used to reduce pyrimidine by RutA via the Rut pathway. In Escherichia coli O1:K1 / APEC, this protein is FMN reductase (NADH) RutF.